Here is a 211-residue protein sequence, read N- to C-terminus: FMN-dependent NADH:quinone oxidoreductase 2 (211 aa).

Residues serine 10 and 17–19 (SRS) contribute to the FMN site.

It belongs to the azoreductase type 1 family. Homodimer. FMN serves as cofactor.

The enzyme catalyses 2 a quinone + NADH + H(+) = 2 a 1,4-benzosemiquinone + NAD(+). The catalysed reaction is N,N-dimethyl-1,4-phenylenediamine + anthranilate + 2 NAD(+) = 2-(4-dimethylaminophenyl)diazenylbenzoate + 2 NADH + 2 H(+). Functionally, quinone reductase that provides resistance to thiol-specific stress caused by electrophilic quinones. Its function is as follows. Also exhibits azoreductase activity. Catalyzes the reductive cleavage of the azo bond in aromatic azo compounds to the corresponding amines. This chain is FMN-dependent NADH:quinone oxidoreductase 2, found in Listeria innocua serovar 6a (strain ATCC BAA-680 / CLIP 11262).